Consider the following 451-residue polypeptide: tRNA modification GTPase MnmE (451 aa).

3 residues coordinate (6S)-5-formyl-5,6,7,8-tetrahydrofolate: R23, E80, and K119. The TrmE-type G domain occupies 215–372; the sequence is GIKVVLTGQP…LRTVLLKTVG (158 aa). N225 provides a ligand contact to K(+). GTP is bound by residues 225–230, 244–250, and 269–272; these read NVGKSS, TEIPGTT, and DTAG. S229 is a binding site for Mg(2+). Residues T244, I246, and T249 each coordinate K(+). T250 lines the Mg(2+) pocket. (6S)-5-formyl-5,6,7,8-tetrahydrofolate is bound at residue K451.

Belongs to the TRAFAC class TrmE-Era-EngA-EngB-Septin-like GTPase superfamily. TrmE GTPase family. As to quaternary structure, homodimer. Heterotetramer of two MnmE and two MnmG subunits. It depends on K(+) as a cofactor.

Its subcellular location is the cytoplasm. Its function is as follows. Exhibits a very high intrinsic GTPase hydrolysis rate. Involved in the addition of a carboxymethylaminomethyl (cmnm) group at the wobble position (U34) of certain tRNAs, forming tRNA-cmnm(5)s(2)U34. The polypeptide is tRNA modification GTPase MnmE (Nitrosomonas eutropha (strain DSM 101675 / C91 / Nm57)).